A 290-amino-acid polypeptide reads, in one-letter code: Probable protein phosphatase 2C 62 (290 aa).

Residues Lys-38–Phe-288 form the PPM-type phosphatase domain. Positions 75, 76, 240, and 279 each coordinate Mn(2+).

It belongs to the PP2C family. Mg(2+) serves as cofactor. It depends on Mn(2+) as a cofactor.

The enzyme catalyses O-phospho-L-seryl-[protein] + H2O = L-seryl-[protein] + phosphate. It carries out the reaction O-phospho-L-threonyl-[protein] + H2O = L-threonyl-[protein] + phosphate. This chain is Probable protein phosphatase 2C 62, found in Oryza sativa subsp. japonica (Rice).